Here is a 650-residue protein sequence, read N- to C-terminus: AP-1-like transcription factor YAP1 (650 aa).

Residues 1 to 89 are disordered; the sequence is MSVSTAKRSL…AFRERKERKM (89 aa). 3 positions are modified to phosphoserine: Ser-9, Ser-14, and Ser-17. Composition is skewed to basic and acidic residues over residues 22–50, 58–68, and 80–89; these read EGSKSRHDEIENEHRRTGTRDGEDSEQPK, KKQDLDPETKQ, and AFRERKERKM. 2 consecutive short sequence motifs (bipartite nuclear localization signal) follow at residues 35–42 and 68–75; these read HRRTGTRD and QKRTAQNR. Residues 64–127 enclose the bZIP domain; it reads PETKQKRTAQ…ITLVNELKKY (64 aa). Residues 67 to 90 are basic motif; the sequence is KQKRTAQNRAAQRAFRERKERKMK. The segment at 92–120 is leucine-zipper; it reads LEKKVQSLESIQQQNEVEATFLRDQLITL. 2 disordered regions span residues 149-169 and 183-251; these read HFSKNNVNHSNSEPIDTPNDD and QYPL…PNSS. Positions 150 to 162 are enriched in polar residues; that stretch reads FSKNNVNHSNSEP. Position 165 is a phosphothreonine (Thr-165). Positions 195–209 are enriched in polar residues; the sequence is SKNVGKQLPSPNDPS. Ser-204 is modified (phosphoserine). The interval 220-378 is transcription activation 1; that stretch reads QKKLSDATDS…YENSFSGFGR (159 aa). Residues 226–246 are compositionally biased toward low complexity; that stretch reads ATDSSSATLDSLSNSNDVLNN. A n-CRD region spans residues 303–315; it reads CSKMNQVCGTRQC. Intrachain disulfides connect Cys-303-Cys-598, Cys-310-Cys-629, Cys-598-Cys-620, Cys-598-Cys-629, and Cys-620-Cys-629. A Phosphoserine modification is found at Ser-372. The span at 392–414 shows a compositional bias: low complexity; the sequence is DNSTGSTDSTGSTGNKNKKNNNN. Disordered stretches follow at residues 392–419, 510–532, and 551–591; these read DNSTGSTDSTGSTGNKNKKNNNNSDDVL, LFGEFLEDDDDDKKAANMSDDES, and LQSV…VPSK. The transcription activation 2 stretch occupies residues 430 to 537; it reads NQVTNFFSPG…SDDESSLIKN (108 aa). Ser-528 is subject to Phosphoserine. The span at 551 to 570 shows a compositional bias: polar residues; it reads LQSVPGNESEISQKNGSSLQ. Positions 571–580 are enriched in low complexity; sequence NADKINNGND. Positions 598–629 are c-CRD; sequence CSEIWDRITTHPKYSDIDVDGLCSELMAKAKC. The short motif at 614-621 is the Nuclear export signal element; the sequence is IDVDGLCS.

It belongs to the bZIP family. YAP subfamily. Interacts independent of oxidation state in the cytoplasm with the karyopherin PSE1/KAP121 (and less strongly with KAP123). The reduced form of YAP1 interacts in the nucleus with the nuclear export protein CRM1, and in the cytoplasm with YBP1 and the peroxiredoxin HYR1/GPX3/ORP1. Interacts with RBG1. Post-translationally, depending on the oxidative stress inducing agent, YAP1 can undergo two distinct conformational changes, both involving disulfide bond formation, and both masking the nuclear export signal, thus abolishing nuclear export by CRM1/exportin 1. The disulfide stress-inducing agent diamide leads to the formation of one of three possible disulfide bonds in the c-CRD. Peroxide stress induces the formation of the HYR1/GPX3- and YBP1-dependent interdomain disulfide bond between Cys-303 and Cys-598 (causing nuclear localization of YAP1), and the possibly stabilizing bond between Cys-310 and Cys-629 (required for full activity of YAP1).

The protein localises to the nucleus. It localises to the cytoplasm. Functionally, transcription activator involved in oxidative stress response and redox homeostasis. Regulates the transcription of genes encoding antioxidant enzymes and components of the cellular thiol-reducing pathways, including the thioredoxin system (TRX2, TRR1), the glutaredoxin system (GSH1, GLR1), superoxide dismutase (SOD1, SOD2), glutathione peroxidase (GPX2), and thiol-specific peroxidases (TSA1, AHP1). The induction of some of these genes requires the cooperative action of both, YAP1 and SKN7. Preferentially binds to promoters with the core binding site 5'-TTA[CG]TAA-3'. Activity of the transcription factor is controlled through oxidation of specific cysteine residues resulting in the alteration of its subcellular location. Oxidative stress (as well as carbon stress, but not increased temperature, acidic pH, or ionic stress) induces nuclear accumulation and as a result YAP1 transcriptional activity. Activation by hydrogen peroxide or thiol-reactive chemicals elicit distinct adaptive gene responses. Nuclear export is restored when disulfide bonds are reduced by thioredoxin (TRX2), whose expression is controlled by YAP1, providing a mechanism for negative autoregulation. When overexpressed, YAP1 confers pleiotropic drug-resistance and increases cellular tolerance to cadmium, iron chelators and zinc. The sequence is that of AP-1-like transcription factor YAP1 from Saccharomyces cerevisiae (strain ATCC 204508 / S288c) (Baker's yeast).